The primary structure comprises 637 residues: Biosynthetic arginine decarboxylase (637 aa).

Lys101 carries the post-translational modification N6-(pyridoxal phosphate)lysine. 286-296 serves as a coordination point for substrate; sequence FDVGGGLAVDY.

The protein belongs to the Orn/Lys/Arg decarboxylase class-II family. SpeA subfamily. The cofactor is Mg(2+). Pyridoxal 5'-phosphate serves as cofactor.

It catalyses the reaction L-arginine + H(+) = agmatine + CO2. It participates in amine and polyamine biosynthesis; agmatine biosynthesis; agmatine from L-arginine: step 1/1. In terms of biological role, catalyzes the biosynthesis of agmatine from arginine. In Shewanella sp. (strain ANA-3), this protein is Biosynthetic arginine decarboxylase.